Reading from the N-terminus, the 185-residue chain is Elongation factor P (185 aa).

It belongs to the elongation factor P family.

The protein localises to the cytoplasm. Its pathway is protein biosynthesis; polypeptide chain elongation. Involved in peptide bond synthesis. Stimulates efficient translation and peptide-bond synthesis on native or reconstituted 70S ribosomes in vitro. Probably functions indirectly by altering the affinity of the ribosome for aminoacyl-tRNA, thus increasing their reactivity as acceptors for peptidyl transferase. This Nitratidesulfovibrio vulgaris (strain DP4) (Desulfovibrio vulgaris) protein is Elongation factor P.